A 242-amino-acid chain; its full sequence is Caffeoyl-CoA O-methyltransferase (242 aa).

Substrate is bound at residue K16. Residues T58, E80, 82-83 (GV), S88, D106, and A135 each bind S-adenosyl-L-methionine. D158 is a substrate binding site. D158 is an a divalent metal cation binding site. D160 is an S-adenosyl-L-methionine binding site. The a divalent metal cation site is built by D184 and N185. N189 contacts substrate.

It belongs to the class I-like SAM-binding methyltransferase superfamily. Cation-dependent O-methyltransferase family. CCoAMT subfamily. The cofactor is a divalent metal cation.

It catalyses the reaction (E)-caffeoyl-CoA + S-adenosyl-L-methionine = (E)-feruloyl-CoA + S-adenosyl-L-homocysteine + H(+). It functions in the pathway aromatic compound metabolism; phenylpropanoid biosynthesis. Its function is as follows. Methylates caffeoyl-CoA to feruloyl-CoA and 5-hydroxyferuloyl-CoA to sinapoyl-CoA. Plays a role in the synthesis of feruloylated polysaccharides. Involved in the reinforcement of the plant cell wall. Also involved in the responding to wounding or pathogen challenge by the increased formation of cell wall-bound ferulic acid polymers. The polypeptide is Caffeoyl-CoA O-methyltransferase (CCOAOMT) (Solanum tuberosum (Potato)).